The sequence spans 486 residues: Vesicular GABA transporter (486 aa).

The Cytoplasmic portion of the chain corresponds to 1–93 (MASNRFQNLQ…EASEPISALQ (93 aa)). Polar residues predominate over residues 29-46 (LNEVPSYQNQPQTGESGS). The segment at 29 to 85 (LNEVPSYQNQPQTGESGSNPPPHDRLEPIQESVVSEQPQKDDINKQEEAKDDGHGEA) is disordered. Basic and acidic residues predominate over residues 66 to 85 (PQKDDINKQEEAKDDGHGEA). A helical transmembrane segment spans residues 94–114 (AAWNVTNAIQGMFIVGLPIAV). Topologically, residues 115–119 (KVGGW) are lumenal, vesicle. A helical membrane pass occupies residues 120–140 (WSIGAMVGVAYVCYWTGVLLI). Over 141-167 (ECLYENGVKKRKTYREIADFYKPGFGK) the chain is Cytoplasmic. The chain crosses the membrane as a helical span at residues 168 to 188 (WVLAAQLTELLSTCIIYLVLA). Over 189-203 (ADLLQSCFPSVDKAG) the chain is Lumenal, vesicle. A helical membrane pass occupies residues 204–224 (WMMITSASLLTCSFLDDLQIV). Over 225–228 (SRLS) the chain is Cytoplasmic. Residues 229-249 (FFNAISHLIVNLIMVLYCLSF) form a helical membrane-spanning segment. The Lumenal, vesicle segment spans residues 250 to 263 (VSQWSFSTITFSLN). Residues 264 to 284 (INTLPTIVGMVVFGYTSHIFL) traverse the membrane as a helical segment. Topologically, residues 285-305 (PNLEGNMKNPAQFNVMLKWSH) are cytoplasmic. A helical membrane pass occupies residues 306–326 (IAAAVFKVVFGMLGFLTFGEL). Residues 327–341 (TQEEISNSLPNQSFK) lie on the Lumenal, vesicle side of the membrane. N-linked (GlcNAc...) asparagine glycosylation is present at N337. A helical membrane pass occupies residues 342–362 (ILVNLILVVKALLSYPLPFYA). Residues 363–398 (AVQLLKNNLFLGYPQTPFTSCYSPDKSLREWAVTLR) lie on the Cytoplasmic side of the membrane. Residues 399-419 (IILVLFTLFVALSVPYLVELM) form a helical membrane-spanning segment. Residues 420 to 421 (GL) are Lumenal, vesicle-facing. Residues 422 to 442 (VGNITGTMLSFIWPALFHLYI) traverse the membrane as a helical segment. Over 443–457 (KEKTLNNFEKRFDQG) the chain is Cytoplasmic. Residues 458–478 (IIIMGCSVCISGVYFSSMELL) traverse the membrane as a helical segment. The Lumenal, vesicle segment spans residues 479–486 (RAINSADS).

It belongs to the amino acid/polyamine transporter 2 family.

It is found in the cytoplasmic vesicle membrane. Functionally, involved in the uptake of GABA into the synaptic vesicles. This chain is Vesicular GABA transporter (unc-47), found in Caenorhabditis elegans.